The primary structure comprises 357 residues: DNA replication and repair protein RecF (357 aa).

Position 30–37 (30–37 (GANGSGKT)) interacts with ATP.

The protein belongs to the RecF family.

The protein localises to the cytoplasm. Functionally, the RecF protein is involved in DNA metabolism; it is required for DNA replication and normal SOS inducibility. RecF binds preferentially to single-stranded, linear DNA. It also seems to bind ATP. This is DNA replication and repair protein RecF from Escherichia coli O6:K15:H31 (strain 536 / UPEC).